Here is a 221-residue protein sequence, read N- to C-terminus: UPF0502 protein CPS_0106 (221 aa).

This sequence belongs to the UPF0502 family.

The sequence is that of UPF0502 protein CPS_0106 from Colwellia psychrerythraea (strain 34H / ATCC BAA-681) (Vibrio psychroerythus).